The following is a 107-amino-acid chain: U1-lycotoxin-Ls1i (107 aa).

Positions 1–20 (MMKVLVVVALLVTLISYSSS) are cleaved as a signal peptide. Positions 21 to 41 (EGIDDLEADELLSLMANEQTR) are excised as a propeptide. 4 cysteine pairs are disulfide-bonded: Cys44-Cys59, Cys51-Cys68, Cys58-Cys86, and Cys70-Cys84.

The protein belongs to the neurotoxin 19 (CSTX) family. 04 (U1-Lctx) subfamily. In terms of tissue distribution, expressed by the venom gland.

The protein resides in the secreted. The protein is U1-lycotoxin-Ls1i of Lycosa singoriensis (Wolf spider).